Consider the following 222-residue polypeptide: Ras-related protein Rab11D (222 aa).

22–29 (GDSAVGKS) lines the GTP pocket. Positions 44–52 (SKATIGVEF) match the Effector region motif. GTP-binding positions include 70 to 74 (DTAGQ) and 128 to 131 (NKTD). 2 S-geranylgeranyl cysteine lipidation sites follow: Cys219 and Cys220.

The protein belongs to the small GTPase superfamily. Rab family.

It is found in the cell membrane. This chain is Ras-related protein Rab11D (RAB11D), found in Nicotiana tabacum (Common tobacco).